We begin with the raw amino-acid sequence, 525 residues long: Mitochondrial-processing peptidase subunit alpha (525 aa).

Residues 1-33 constitute a mitochondrion transit peptide; sequence MAAVVLAATRLLRGSGSWGCSRLRFGPPAYRRF. Lys64 is modified (N6-succinyllysine). Residue Lys299 is modified to N6-acetyllysine.

The protein belongs to the peptidase M16 family. In terms of assembly, heterodimer of PMPCA (alpha) and PMPCB (beta) subunits, forming the mitochondrial processing protease (MPP) in which PMPCA is involved in substrate recognition and binding and PMPCB is the catalytic subunit.

The protein resides in the mitochondrion matrix. It is found in the mitochondrion inner membrane. Functionally, substrate recognition and binding subunit of the essential mitochondrial processing protease (MPP), which cleaves the mitochondrial sequence off newly imported precursors proteins. In Pongo abelii (Sumatran orangutan), this protein is Mitochondrial-processing peptidase subunit alpha (PMPCA).